Reading from the N-terminus, the 256-residue chain is Photosystem I chlorophyll a/b-binding protein 5, chloroplastic (256 aa).

Residues 1–32 (MAVVLRGGITGGFLHHRRDASSVITRRISSVK) constitute a chloroplast transit peptide. Alanine 33 bears the N-acetylalanine mark. Tryptophan 49 provides a ligand contact to chlorophyll b. Chlorophyll a-binding residues include phenylalanine 69 and glutamate 88. Arginine 93 contributes to the chlorophyll b binding site. The next 2 membrane-spanning stretches (helical) occupy residues 94–113 (FAML…TTGI) and 129–146 (FAST…MGFA). 2 residues coordinate chlorophyll b: glutamate 147 and arginine 150. Positions 205, 206, 209, 211, 223, and 238 each coordinate chlorophyll a. Residues 212-232 (LAMMAMLGFFVQASVTHTGPI) form a helical membrane-spanning segment.

This sequence belongs to the light-harvesting chlorophyll a/b-binding (LHC) protein family. As to quaternary structure, the LHC complex consists of chlorophyll a-b binding proteins. Homodimer. Heterodimer with LHCA2 and, possibly, LHCA3. Can substitute to LHCA4 to form a complex with LHCA1. Binds pigments. Element of the NAD(P)H dehydrogenase-photosystem I supercomplex (NDH-PSI). Binds at least 14 chlorophylls (8 Chl-a and 6 Chl-b) and carotenoids such as lutein and neoxanthin. serves as cofactor. In terms of processing, photoregulated by reversible phosphorylation of its threonine residues.

It is found in the plastid. It localises to the chloroplast thylakoid membrane. Its function is as follows. The light-harvesting complex (LHC) functions as a light receptor, it captures and delivers excitation energy to photosystems with which it is closely associated. Seems involved in the function of the photosystem I in low light conditions, when other LHCA proteins are less abundant. Required, together with LHCA6, for the formation of a full-size NAD(P)H dehydrogenase-photosystem I supercomplex (NDH-PSI) that triggers cyclic and chlororespiratory electron transport in chloroplast thylakoids, especially under stress conditions (e.g. increased light intensity). This is Photosystem I chlorophyll a/b-binding protein 5, chloroplastic from Arabidopsis thaliana (Mouse-ear cress).